We begin with the raw amino-acid sequence, 246 residues long: MCDKEMCDKEMCEKKEEVDEDIYIASFDIGKVNFAYCIEKCFLKDIKKRTETTIDEMCSKGKIEIIDNVRLVSFPKNIVTRRRGPRKGTTYKPSGKYTFESLLLFLEERKTFWNKCHIFVIEQQMSQNKEGLKISYHLEAYFKTCYGTFKEVVLFPSYHKTQVFEAEKWINLDPLTRKTDKYGKPFYTKMSYNNRKKSCISKALEILEQRHDTDTIWKLERSQKKDDMCDVICQLQAYKWLYLFEK.

Belongs to the IIV-6 170L family.

This is an uncharacterized protein from Acheta domesticus (House cricket).